Consider the following 68-residue polypeptide: Beta-defensin 1 (68 aa).

The first 21 residues, 1-21 (MRTSYLLLFTLCLLLSEMASG), serve as a signal peptide directing secretion. Positions 22 to 32 (DNFLTGLGHRS) are excised as a propeptide. 3 disulfide bridges follow: Cys-37–Cys-66, Cys-44–Cys-59, and Cys-49–Cys-67.

It belongs to the beta-defensin family. In terms of assembly, monomer. Homodimer.

The protein localises to the secreted. It localises to the membrane. Functionally, has bactericidal activity. May act as a ligand for C-C chemokine receptor CCR6. Positively regulates the sperm motility and bactericidal activity in a CCR6-dependent manner. Binds to CCR6 and triggers Ca2+ mobilization in the sperm which is important for its motility. The polypeptide is Beta-defensin 1 (DEFB1) (Hylobates moloch (Silvery gibbon)).